Consider the following 439-residue polypeptide: Serine--tRNA ligase (439 aa).

Thr242–Glu244 lines the L-serine pocket. Position 273 to 275 (Arg273 to Glu275) interacts with ATP. L-serine is bound at residue Glu296. Glu360 to Ser363 is a binding site for ATP. Residue Ser396 coordinates L-serine.

It belongs to the class-II aminoacyl-tRNA synthetase family. Type-1 seryl-tRNA synthetase subfamily. As to quaternary structure, homodimer. The tRNA molecule binds across the dimer.

Its subcellular location is the cytoplasm. The catalysed reaction is tRNA(Ser) + L-serine + ATP = L-seryl-tRNA(Ser) + AMP + diphosphate + H(+). It carries out the reaction tRNA(Sec) + L-serine + ATP = L-seryl-tRNA(Sec) + AMP + diphosphate + H(+). Its pathway is aminoacyl-tRNA biosynthesis; selenocysteinyl-tRNA(Sec) biosynthesis; L-seryl-tRNA(Sec) from L-serine and tRNA(Sec): step 1/1. Functionally, catalyzes the attachment of serine to tRNA(Ser). Is also able to aminoacylate tRNA(Sec) with serine, to form the misacylated tRNA L-seryl-tRNA(Sec), which will be further converted into selenocysteinyl-tRNA(Sec). In Oenococcus oeni (strain ATCC BAA-331 / PSU-1), this protein is Serine--tRNA ligase.